Reading from the N-terminus, the 443-residue chain is ATP-dependent protease ATPase subunit HslU (443 aa).

ATP-binding positions include Ile-20, 62-67 (GVGKTE), Asp-255, Glu-321, and Arg-393.

It belongs to the ClpX chaperone family. HslU subfamily. A double ring-shaped homohexamer of HslV is capped on each side by a ring-shaped HslU homohexamer. The assembly of the HslU/HslV complex is dependent on binding of ATP.

It localises to the cytoplasm. In terms of biological role, ATPase subunit of a proteasome-like degradation complex; this subunit has chaperone activity. The binding of ATP and its subsequent hydrolysis by HslU are essential for unfolding of protein substrates subsequently hydrolyzed by HslV. HslU recognizes the N-terminal part of its protein substrates and unfolds these before they are guided to HslV for hydrolysis. This chain is ATP-dependent protease ATPase subunit HslU, found in Helicobacter pylori (strain G27).